We begin with the raw amino-acid sequence, 126 residues long: Probable glycine cleavage system H protein (126 aa).

The 83-residue stretch at Val24–Glu106 folds into the Lipoyl-binding domain. Lys65 is modified (N6-lipoyllysine).

The protein belongs to the GcvH family. In terms of assembly, the glycine cleavage system is composed of four proteins: P, T, L and H. Requires (R)-lipoate as cofactor.

Functionally, the glycine cleavage system catalyzes the degradation of glycine. The H protein shuttles the methylamine group of glycine from the P protein to the T protein. The chain is Probable glycine cleavage system H protein from Natronomonas pharaonis (strain ATCC 35678 / DSM 2160 / CIP 103997 / JCM 8858 / NBRC 14720 / NCIMB 2260 / Gabara) (Halobacterium pharaonis).